Consider the following 559-residue polypeptide: Urocanate hydratase (559 aa).

NAD(+)-binding positions include 49-50, Q127, 173-175, D193, R198, 239-240, 260-264, 270-271, and Y319; these read GG, GMG, NA, QTSAH, and YL. C407 is an active-site residue. Residue G489 participates in NAD(+) binding.

This sequence belongs to the urocanase family. NAD(+) serves as cofactor.

Its subcellular location is the cytoplasm. It catalyses the reaction 4-imidazolone-5-propanoate = trans-urocanate + H2O. The protein operates within amino-acid degradation; L-histidine degradation into L-glutamate; N-formimidoyl-L-glutamate from L-histidine: step 2/3. Catalyzes the conversion of urocanate to 4-imidazolone-5-propionate. The polypeptide is Urocanate hydratase (Shouchella clausii (strain KSM-K16) (Alkalihalobacillus clausii)).